The chain runs to 162 residues: Large ribosomal subunit protein uL10 (162 aa).

Belongs to the universal ribosomal protein uL10 family. Part of the ribosomal stalk of the 50S ribosomal subunit. The N-terminus interacts with L11 and the large rRNA to form the base of the stalk. The C-terminus forms an elongated spine to which L12 dimers bind in a sequential fashion forming a multimeric L10(L12)X complex.

In terms of biological role, forms part of the ribosomal stalk, playing a central role in the interaction of the ribosome with GTP-bound translation factors. The polypeptide is Large ribosomal subunit protein uL10 (Vibrio vulnificus (strain CMCP6)).